We begin with the raw amino-acid sequence, 266 residues long: 4-hydroxy-tetrahydrodipicolinate reductase (266 aa).

10-15 provides a ligand contact to NAD(+); it reads GPRGRM. Residue lysine 38 coordinates NADP(+). NAD(+)-binding positions include 99–101 and 125–128; these read GTT and APNF. Histidine 155 serves as the catalytic Proton donor/acceptor. Residue histidine 156 coordinates (S)-2,3,4,5-tetrahydrodipicolinate. Residue lysine 159 is the Proton donor of the active site. 165-166 provides a ligand contact to (S)-2,3,4,5-tetrahydrodipicolinate; it reads GT.

It belongs to the DapB family.

The protein localises to the cytoplasm. The catalysed reaction is (S)-2,3,4,5-tetrahydrodipicolinate + NAD(+) + H2O = (2S,4S)-4-hydroxy-2,3,4,5-tetrahydrodipicolinate + NADH + H(+). The enzyme catalyses (S)-2,3,4,5-tetrahydrodipicolinate + NADP(+) + H2O = (2S,4S)-4-hydroxy-2,3,4,5-tetrahydrodipicolinate + NADPH + H(+). It functions in the pathway amino-acid biosynthesis; L-lysine biosynthesis via DAP pathway; (S)-tetrahydrodipicolinate from L-aspartate: step 4/4. Its function is as follows. Catalyzes the conversion of 4-hydroxy-tetrahydrodipicolinate (HTPA) to tetrahydrodipicolinate. The polypeptide is 4-hydroxy-tetrahydrodipicolinate reductase (Bacillus cytotoxicus (strain DSM 22905 / CIP 110041 / 391-98 / NVH 391-98)).